Consider the following 145-residue polypeptide: Bacilliredoxin BrxB (145 aa).

Residues Cys52 and Cys54 each act as nucleophile in the active site. S-bacillithiol cysteine disulfide is present on Cys52. Positions 52 to 54 match the CXC active site motif motif; the sequence is CGC. Cys52 and Cys54 are disulfide-bonded.

It belongs to the bacilliredoxin family. In terms of assembly, interacts with BrxC. Post-translationally, N-terminal Cys of the CXC active site motif can react with bacillithiol (BSH) to form mixed disulfides. S-bacillithiolation protects Cys residues against overoxidation by acting as a redox switch in response to oxidative stress.

Functionally, S-bacillithiolation is the formation of mixed disulfide bonds between protein thiols and the general thiol reductant bacillithiol (BSH) under oxidative stress. BSH is an equivalent of glutathione (GSH) in Firmicutes. This protein is a dithiol bacilliredoxin, which debacillithiolates (removes BSH) the S-bacillithiolated OhrR (OhrR-SSB) in vitro and in vivo NaOCl-generated S-bacillithiolated MetE (MetE-SSB). Involved in maintaining redox homeostasis in response to disulfide stress conditions. The polypeptide is Bacilliredoxin BrxB (Bacillus subtilis (strain 168)).